Reading from the N-terminus, the 174-residue chain is Crossover junction endodeoxyribonuclease RuvC (174 aa).

Active-site residues include D8, E68, and D140. Residues D8, E68, and D140 each coordinate Mg(2+).

Belongs to the RuvC family. As to quaternary structure, homodimer which binds Holliday junction (HJ) DNA. The HJ becomes 2-fold symmetrical on binding to RuvC with unstacked arms; it has a different conformation from HJ DNA in complex with RuvA. In the full resolvosome a probable DNA-RuvA(4)-RuvB(12)-RuvC(2) complex forms which resolves the HJ. Mg(2+) is required as a cofactor.

It is found in the cytoplasm. It catalyses the reaction Endonucleolytic cleavage at a junction such as a reciprocal single-stranded crossover between two homologous DNA duplexes (Holliday junction).. The RuvA-RuvB-RuvC complex processes Holliday junction (HJ) DNA during genetic recombination and DNA repair. Endonuclease that resolves HJ intermediates. Cleaves cruciform DNA by making single-stranded nicks across the HJ at symmetrical positions within the homologous arms, yielding a 5'-phosphate and a 3'-hydroxyl group; requires a central core of homology in the junction. The consensus cleavage sequence is 5'-(A/T)TT(C/G)-3'. Cleavage occurs on the 3'-side of the TT dinucleotide at the point of strand exchange. HJ branch migration catalyzed by RuvA-RuvB allows RuvC to scan DNA until it finds its consensus sequence, where it cleaves and resolves the cruciform DNA. This is Crossover junction endodeoxyribonuclease RuvC from Legionella pneumophila (strain Corby).